The primary structure comprises 293 residues: Foldase protein PrsA 2 (293 aa).

The N-terminal stretch at 1 to 20 (MKKKLILGLVMMMALFSLAA) is a signal peptide. Residue Cys-21 is the site of N-palmitoyl cysteine attachment. A lipid anchor (S-diacylglycerol cysteine) is attached at Cys-21. One can recognise a PpiC domain in the interval 135–226 (QPDITVSHIL…YGYHIIQMDK (92 aa)).

Belongs to the PrsA family.

The protein resides in the cell membrane. The catalysed reaction is [protein]-peptidylproline (omega=180) = [protein]-peptidylproline (omega=0). Plays a major role in protein secretion by helping the post-translocational extracellular folding of several secreted proteins. The protein is Foldase protein PrsA 2 (prsA2) of Listeria monocytogenes serovar 1/2a (strain ATCC BAA-679 / EGD-e).